The sequence spans 112 residues: Signal recognition particle 19 kDa protein (112 aa).

This sequence belongs to the SRP19 family. As to quaternary structure, part of the signal recognition particle protein translocation system, which is composed of SRP and FtsY. Archaeal SRP consists of a 7S RNA molecule of 300 nucleotides and two protein subunits: SRP54 and SRP19.

The protein localises to the cytoplasm. Functionally, involved in targeting and insertion of nascent membrane proteins into the cytoplasmic membrane. Binds directly to 7S RNA and mediates binding of the 54 kDa subunit of the SRP. This is Signal recognition particle 19 kDa protein from Aeropyrum pernix (strain ATCC 700893 / DSM 11879 / JCM 9820 / NBRC 100138 / K1).